A 281-amino-acid chain; its full sequence is Probable endonuclease 4 (281 aa).

Positions 68, 108, 145, 179, 182, 216, 229, 231, and 261 each coordinate Zn(2+).

It belongs to the AP endonuclease 2 family. Zn(2+) serves as cofactor.

The catalysed reaction is Endonucleolytic cleavage to 5'-phosphooligonucleotide end-products.. In terms of biological role, endonuclease IV plays a role in DNA repair. It cleaves phosphodiester bonds at apurinic or apyrimidinic (AP) sites, generating a 3'-hydroxyl group and a 5'-terminal sugar phosphate. In Trichlorobacter lovleyi (strain ATCC BAA-1151 / DSM 17278 / SZ) (Geobacter lovleyi), this protein is Probable endonuclease 4.